A 543-amino-acid chain; its full sequence is MGFRVCVIVVFLGCLLLVPEKTMAQEMKRASIVIQGARRVCETDENFVCATLDWWPHDKCNYDQCPWGYSSVINMDLTRPLLTKAIKAFKPLRIRIGGSLQDQVIYDVGNLKTPCRPFQKMNSGLFGFSKGCLHMKRWDELNSFLTATGAVVTFGLNALRGRHKLRGKAWGGAWDHINTQDFLNYTVSKGYVIDSWEFGNELSGSGVGASVSAELYGKDLIVLKDVINKVYKNSWLHKPILVAPGGFYEQQWYTKLLEISGPSVVDVVTHHIYNLGSGNDPALVKKIMDPSYLSQVSKTFKDVNQTIQEHGPWASPWVGESGGAYNSGGRHVSDTFIDSFWYLDQLGMSARHNTKVYCRQTLVGGFYGLLEKGTFVPNPDYYSALLWHRLMGKGVLAVQTDGPPQLRVYAHCSKGRAGVTLLLINLSNQSDFTVSVSNGINVVLNAESRKKKSLLDTLKRPFSWIGSKASDGYLNREEYHLTPENGVLRSKTMVLNGKSLKPTATGDIPSLEPVLRSVNSPLNVLPLSMSFIVLPNFDASACS.

The signal sequence occupies residues 1-24 (MGFRVCVIVVFLGCLLLVPEKTMA). Residue N184 is glycosylated (N-linked (GlcNAc...) asparagine). E201 serves as the catalytic Proton donor. Residue N304 is glycosylated (N-linked (GlcNAc...) asparagine). E320 serves as the catalytic Nucleophile. 2 N-linked (GlcNAc...) asparagine glycosylation sites follow: N425 and N428.

Belongs to the glycosyl hydrolase 79 family.

Its subcellular location is the lysosome membrane. The protein resides in the secreted. Its function is as follows. Endoglycosidase which is a cell surface and extracellular matrix-degrading enzyme. Cleaves heparan sulfate proteoglycans (HSPGs) into heparan sulfate side chains and core proteoglycans. This Arabidopsis thaliana (Mouse-ear cress) protein is Heparanase-like protein 1.